The sequence spans 591 residues: Probable translation initiation factor IF-2 (591 aa).

The region spanning 7–223 is the tr-type G domain; it reads LRTPIVCVMG…LLGLAQKFLE (217 aa). Residues 16 to 23 form a G1 region; it reads GHVDHGKT. 16–23 provides a ligand contact to GTP; that stretch reads GHVDHGKT. Residues 41 to 45 are G2; the sequence is AITQH. Residues 78–81 are G3; it reads DTPG. GTP contacts are provided by residues 78–82 and 132–135; these read DTPGH and NKID. The segment at 132–135 is G4; it reads NKID. The segment at 200 to 202 is G5; that stretch reads SAF.

This sequence belongs to the TRAFAC class translation factor GTPase superfamily. Classic translation factor GTPase family. IF-2 subfamily.

Functionally, function in general translation initiation by promoting the binding of the formylmethionine-tRNA to ribosomes. Seems to function along with eIF-2. The polypeptide is Probable translation initiation factor IF-2 (Methanosarcina mazei (strain ATCC BAA-159 / DSM 3647 / Goe1 / Go1 / JCM 11833 / OCM 88) (Methanosarcina frisia)).